Here is a 387-residue protein sequence, read N- to C-terminus: Phosphoglycerate kinase (387 aa).

Substrate contacts are provided by residues 21-23, Arg-36, 59-62, Arg-113, and Arg-146; these read DLN and HLGR. Residues Lys-197, Glu-314, and 340–343 each bind ATP; that span reads GGDT.

This sequence belongs to the phosphoglycerate kinase family. In terms of assembly, monomer.

Its subcellular location is the cytoplasm. It catalyses the reaction (2R)-3-phosphoglycerate + ATP = (2R)-3-phospho-glyceroyl phosphate + ADP. It functions in the pathway carbohydrate degradation; glycolysis; pyruvate from D-glyceraldehyde 3-phosphate: step 2/5. In Pseudomonas entomophila (strain L48), this protein is Phosphoglycerate kinase.